Consider the following 409-residue polypeptide: Nucleoprotein (409 aa).

4 disordered regions span residues 1–32 (MASG…SSGN), 44–69 (LNSP…QQHG), 121–194 (ADVK…GSED), and 238–259 (VDQV…DKMN). Residues 29–160 (SSGNASWFQA…GNFRWDFIPL (132 aa)) form an RNA-binding region. The CoV N NTD domain maps to 31 to 156 (GNASWFQAIK…GGPDGNFRWD (126 aa)). Residues 162–179 (RGRSGRSTAASSAASSRP) show a composition bias toward low complexity. Composition is skewed to basic and acidic residues over residues 180-192 (PSRE…RSGS) and 247-259 (KGKE…DKMN). Phosphoserine; by host is present on residues Ser-190 and Ser-192. Residues 215 to 331 (TKAKADEMAH…QCVDGVGTRP (117 aa)) enclose the CoV N CTD domain. A dimerization region spans residues 226 to 333 (RYCKRTIPPG…VDGVGTRPKD (108 aa)). Cysteines 320 and 323 form a disulfide. The interval 326 to 409 (GVGTRPKDDE…GDSALGENEL (84 aa)) is disordered. A compositionally biased stretch (low complexity) spans 341 to 356 (RSSSRPATRTSSPAPR). Residues 358–367 (QRLKKEKRPK) show a composition bias toward basic residues. Basic and acidic residues predominate over residues 368–384 (KQDDEVDKALTSDEERN). Thr-378 carries the phosphothreonine; by host modification. Phosphoserine; by host is present on Ser-379.

The protein belongs to the gammacoronavirus nucleocapsid protein family. As to quaternary structure, homooligomer. Both monomeric and oligomeric forms interact with RNA. Interacts with protein M. Interacts with NSP3; this interaction serves to tether the genome to the newly translated replicase-transcriptase complex at a very early stage of infection. Post-translationally, ADP-ribosylated. The ADP-ribosylation is retained in the virion during infection. In terms of processing, phosphorylated on serine and threonine residues.

Its subcellular location is the virion. The protein localises to the host endoplasmic reticulum-Golgi intermediate compartment. It is found in the host Golgi apparatus. Its function is as follows. Packages the positive strand viral genome RNA into a helical ribonucleocapsid (RNP) and plays a fundamental role during virion assembly through its interactions with the viral genome and membrane protein M. Plays an important role in enhancing the efficiency of subgenomic viral RNA transcription as well as viral replication. This is Nucleoprotein from Gallus gallus (Chicken).